Here is a 384-residue protein sequence, read N- to C-terminus: Galactokinase (384 aa).

A substrate-binding site is contributed by E34–D37. An ATP-binding site is contributed by S123–S129. Residues S129 and E161 each coordinate Mg(2+). The Proton acceptor role is filled by D173. Y222 lines the substrate pocket.

It belongs to the GHMP kinase family. GalK subfamily.

It is found in the cytoplasm. It carries out the reaction alpha-D-galactose + ATP = alpha-D-galactose 1-phosphate + ADP + H(+). The protein operates within carbohydrate metabolism; galactose metabolism. Functionally, catalyzes the transfer of the gamma-phosphate of ATP to D-galactose to form alpha-D-galactose-1-phosphate (Gal-1-P). The sequence is that of Galactokinase from Haemophilus influenzae (strain ATCC 51907 / DSM 11121 / KW20 / Rd).